The chain runs to 98 residues: Large ribosomal subunit protein uL23 (98 aa).

Belongs to the universal ribosomal protein uL23 family. As to quaternary structure, part of the 50S ribosomal subunit. Contacts protein L29, and trigger factor when it is bound to the ribosome.

Functionally, one of the early assembly proteins it binds 23S rRNA. One of the proteins that surrounds the polypeptide exit tunnel on the outside of the ribosome. Forms the main docking site for trigger factor binding to the ribosome. The polypeptide is Large ribosomal subunit protein uL23 (Acidothermus cellulolyticus (strain ATCC 43068 / DSM 8971 / 11B)).